The primary structure comprises 488 residues: Probable glycine dehydrogenase (decarboxylating) subunit 2 (488 aa).

Lys273 bears the N6-(pyridoxal phosphate)lysine mark.

It belongs to the GcvP family. C-terminal subunit subfamily. The glycine cleavage system is composed of four proteins: P, T, L and H. In this organism, the P 'protein' is a heterodimer of two subunits. Pyridoxal 5'-phosphate serves as cofactor.

It catalyses the reaction N(6)-[(R)-lipoyl]-L-lysyl-[glycine-cleavage complex H protein] + glycine + H(+) = N(6)-[(R)-S(8)-aminomethyldihydrolipoyl]-L-lysyl-[glycine-cleavage complex H protein] + CO2. In terms of biological role, the glycine cleavage system catalyzes the degradation of glycine. The P protein binds the alpha-amino group of glycine through its pyridoxal phosphate cofactor; CO(2) is released and the remaining methylamine moiety is then transferred to the lipoamide cofactor of the H protein. The protein is Probable glycine dehydrogenase (decarboxylating) subunit 2 of Halalkalibacterium halodurans (strain ATCC BAA-125 / DSM 18197 / FERM 7344 / JCM 9153 / C-125) (Bacillus halodurans).